The following is a 394-amino-acid chain: RILP-like protein 1 (394 aa).

An RH1 domain is found at 2–89; that stretch reads EGISALEKNV…RLERMDRIEK (88 aa). A coiled-coil region spans residues 68–327; that stretch reads EMEELRLELD…EAEEENKLPQ (260 aa). In terms of domain architecture, RH2 spans 282–347; it reads RPRFTLQELR…IPQESGIKRL (66 aa).

It belongs to the RILPL family.

The protein resides in the cytoplasm. It is found in the cytosol. Its subcellular location is the cytoskeleton. The protein localises to the microtubule organizing center. It localises to the centrosome. The protein resides in the cell projection. It is found in the cilium. In terms of biological role, plays a role in the regulation of cell shape and polarity. Plays a role in cellular protein transport, including protein transport away from primary cilia. Neuroprotective protein. The protein is RILP-like protein 1 (rilpl1) of Xenopus laevis (African clawed frog).